The primary structure comprises 167 residues: Photosystem I assembly protein Ycf3 (167 aa).

3 TPR repeats span residues 35–68 (AFSYYRDGMSAQSEGEYAEALANYYEALNLEEDP), 72–105 (SFILYNIGLIHASNGEYVKALDYYHKALEANNKL), and 120–153 (AVKASEINDLETAQALFHEAAQYWKQAIKLAPSN).

The protein belongs to the Ycf3 family.

It is found in the plastid. It localises to the chloroplast thylakoid membrane. Its function is as follows. Essential for the assembly of the photosystem I (PSI) complex. May act as a chaperone-like factor to guide the assembly of the PSI subunits. The sequence is that of Photosystem I assembly protein Ycf3 from Galdieria sulphuraria (Red alga).